The following is a 409-amino-acid chain: Arginine deiminase (409 aa).

The active-site Amidino-cysteine intermediate is C399.

It belongs to the arginine deiminase family.

The protein localises to the cytoplasm. The enzyme catalyses L-arginine + H2O = L-citrulline + NH4(+). It participates in amino-acid degradation; L-arginine degradation via ADI pathway; carbamoyl phosphate from L-arginine: step 1/2. The polypeptide is Arginine deiminase (Streptococcus pneumoniae (strain 70585)).